The following is a 99-amino-acid chain: Putative endopeptidase RzpR (99 aa).

The chain is Putative endopeptidase RzpR (rzpR) from Escherichia coli (strain K12).